The following is a 150-amino-acid chain: MKVIFLADVKGKGKKGEVKEVPTGYAQNFLIKKNLAKEATAQAIGELRGKQKSEEKAHAELVAEAQAIQAKLAEEATLVEFTEKVGPDGRTFGSITSKKIAEELEKQFGIKLDKRNIKVDSPIRSVGLIDVPVKIYQDITGVINLRVKEG.

The protein belongs to the bacterial ribosomal protein bL9 family.

Binds to the 23S rRNA. In Streptococcus gordonii (strain Challis / ATCC 35105 / BCRC 15272 / CH1 / DL1 / V288), this protein is Large ribosomal subunit protein bL9.